The chain runs to 264 residues: Thymidylate synthase (264 aa).

Arginine 21 is a dUMP binding site. Histidine 51 is a binding site for (6R)-5,10-methylene-5,6,7,8-tetrahydrofolate. 126–127 lines the dUMP pocket; it reads RR. Cysteine 146 (nucleophile) is an active-site residue. Residues 166 to 169, asparagine 177, and 207 to 209 each bind dUMP; these read RSAD and HIY. Aspartate 169 contacts (6R)-5,10-methylene-5,6,7,8-tetrahydrofolate. (6R)-5,10-methylene-5,6,7,8-tetrahydrofolate is bound at residue alanine 263.

This sequence belongs to the thymidylate synthase family. Bacterial-type ThyA subfamily. Homodimer.

It is found in the cytoplasm. The enzyme catalyses dUMP + (6R)-5,10-methylene-5,6,7,8-tetrahydrofolate = 7,8-dihydrofolate + dTMP. The protein operates within pyrimidine metabolism; dTTP biosynthesis. Catalyzes the reductive methylation of 2'-deoxyuridine-5'-monophosphate (dUMP) to 2'-deoxythymidine-5'-monophosphate (dTMP) while utilizing 5,10-methylenetetrahydrofolate (mTHF) as the methyl donor and reductant in the reaction, yielding dihydrofolate (DHF) as a by-product. This enzymatic reaction provides an intracellular de novo source of dTMP, an essential precursor for DNA biosynthesis. In Brucella ovis (strain ATCC 25840 / 63/290 / NCTC 10512), this protein is Thymidylate synthase.